The following is a 209-amino-acid chain: Ribosomal RNA large subunit methyltransferase E (209 aa).

Glycine 63, tryptophan 65, aspartate 83, aspartate 99, and aspartate 124 together coordinate S-adenosyl-L-methionine. Residue lysine 164 is the Proton acceptor of the active site.

The protein belongs to the class I-like SAM-binding methyltransferase superfamily. RNA methyltransferase RlmE family.

The protein localises to the cytoplasm. The catalysed reaction is uridine(2552) in 23S rRNA + S-adenosyl-L-methionine = 2'-O-methyluridine(2552) in 23S rRNA + S-adenosyl-L-homocysteine + H(+). Functionally, specifically methylates the uridine in position 2552 of 23S rRNA at the 2'-O position of the ribose in the fully assembled 50S ribosomal subunit. This chain is Ribosomal RNA large subunit methyltransferase E, found in Shewanella oneidensis (strain ATCC 700550 / JCM 31522 / CIP 106686 / LMG 19005 / NCIMB 14063 / MR-1).